The following is a 1249-amino-acid chain: LRR receptor-like serine/threonine-protein kinase GSO1 (1249 aa).

The first 18 residues, 1–18, serve as a signal peptide directing secretion; the sequence is MQPLVLLLLFILCFSGLG. At 19–876 the chain is on the extracellular side; it reads QPGIINNDLQ…QQGLSARSVV (858 aa). 2 N-linked (GlcNAc...) asparagine glycosylation sites follow: Asn77 and Asn117. LRR repeat units lie at residues 94-118, 119-142, 144-166, 168-190, 191-214, 216-238, 239-262, 264-285, 286-310, 312-334, 336-359, 360-383, 385-407, 408-431, 433-455, 457-479, 480-503, 505-527, 528-551, 553-574, 576-598, 599-622, 623-646, 648-670, 671-694, 696-718, 719-742, 744-766, 767-791, 792-815, and 817-838; these read FDNLIHLDLSSNNLVGPIPTALSNL, TSLESLFLFSNQLTGEIPSQLGSL, NIRSLRIGDNELVGDIPETLGNL, NLQMLALASCRLTGPIPSQLGRL, VRVQSLILQDNYLEGPIPAELGNC, DLTVFTAAENMLNGTIPAELGRL, ENLEILNLANNSLTGEIPSQLGEM, QLQYLSLMANQLQGLIPKSLAD, LGNLQTLDLSANNLTGEIPEEFWNM, QLLDLVLANNHLSGSLPKSICSN, TNLEQLVLSGTQLSGEIPVELSKC, QSLKQLDLSNNSLAGSIPEALFEL, ELTDLYLHNNTLEGTLSPSISNL, TNLQWLVLYHNNLEGKLPKEISAL, KLEVLFLYENRFSGEIPQEIGNC, SLKMIDMFGNHFEGEIPPSIGRL, KELNLLHLRQNELVGGLPASLGNC, QLNILDLADNQLSGSIPSSFGFL, KGLEQLMLYNNSLQGNLPDSLISL, NLTRINLSHNRLNGTIHPLCGS, SYLSFDVTNNGFEDEIPLELGNS, QNLDRLRLGKNQLTGKIPWTLGKI, RELSLLDMSSNALTGTIPLQLVLC, KLTHIDLNNNFLSGPIPPWLGKL, SQLGELKLSSNQFVESLPTELFNC, KLLVLSLDGNSLNGSIPQEIGNL, GALNVLNLDKNQFSGSLPQAMGKL, KLYELRLSRNSLTGEIPVEIGQL, QDLQSALDLSYNNFTGDIPSTIGTL, SKLETLDLSHNQLTGEVPGSVGDM, and SLGYLNVSFNNLGGKLKKQFSR. N-linked (GlcNAc...) asparagine glycosylation is found at Asn213, Asn228, and Asn248. Residues Asn298, Asn309, and Asn334 are each glycosylated (N-linked (GlcNAc...) asparagine). N-linked (GlcNAc...) asparagine glycosylation is found at Asn369, Asn393, and Asn406. An N-linked (GlcNAc...) asparagine glycan is attached at Asn454. Residues Asn537, Asn553, Asn558, and Asn565 are each glycosylated (N-linked (GlcNAc...) asparagine). N-linked (GlcNAc...) asparagine glycans are attached at residues Asn693 and Asn708. N-linked (GlcNAc...) asparagine glycosylation occurs at Asn779. N-linked (GlcNAc...) asparagine glycosylation is present at Asn822. Residues 877-897 traverse the membrane as a helical segment; that stretch reads IISAISALTAIGLMILVIALF. Residues 898–1249 lie on the Cytoplasmic side of the membrane; sequence FKQRHDFFKK…NNRTAGYKKL (352 aa). Thr948 bears the Phosphothreonine mark. One can recognise a Protein kinase domain in the interval 951–1240; the sequence is LSEEFMIGSG…ACDSLLHVYN (290 aa). ATP-binding positions include 957 to 965 and Lys979; that span reads IGSGGSGKV. Residues Tyr1027 and Tyr1071 each carry the phosphotyrosine modification. Asp1084 (proton acceptor) is an active-site residue. Phosphotyrosine occurs at positions 1129 and 1136.

This sequence belongs to the protein kinase superfamily. Ser/Thr protein kinase family. In terms of assembly, interacts with CIF1 and CIF2. As to expression, mostly expressed in siliques, seeds, developing embryos and seedlings, detected in flower buds and roots, but not in leaves or stems.

Its subcellular location is the cell membrane. The enzyme catalyses L-seryl-[protein] + ATP = O-phospho-L-seryl-[protein] + ADP + H(+). It catalyses the reaction L-threonyl-[protein] + ATP = O-phospho-L-threonyl-[protein] + ADP + H(+). Functionally, together with GSO2, receptor-like serine/threonine-kinase required during the development of the epidermal surface in embryos and cotyledons. In coordination with GSO2, regulates root growth through control of cell division and cell fate specification. Controls seedling root growth by modulating sucrose response after germination. Receptor of the peptide hormones CIF1 and CIF2 required for contiguous Casparian strip diffusion barrier formation in roots. Required for localizing CASP proteins into the Casparian strip following an uninterrupted, ring-like domain, to trigger endodermal differentiation and thus regulate potassium ion (K) homeostasis. Involved in the maintenance of water transport and root pressure. May also be involved in the regulation of suberin accumulation in the endodermis. This chain is LRR receptor-like serine/threonine-protein kinase GSO1, found in Arabidopsis thaliana (Mouse-ear cress).